We begin with the raw amino-acid sequence, 44 residues long: Diuretic hormone (44 aa).

Valine amide is present on valine 44.

The protein localises to the secreted. Functionally, regulation of fluid secretion. Stimulates primary urine secretion by Malpighian tubules and causes a dose-dependent stimulation of cAMP levels in the tubules. May act as clearance peptide in that it may remove metabolic waste from the hemolymph. The polypeptide is Diuretic hormone (Stomoxys calcitrans (Stable fly)).